The sequence spans 285 residues: Eukaryotic translation initiation factor 3 subunit F-2 (285 aa).

In terms of domain architecture, MPN spans 11 to 145 (VFLKPLVLFQ…TRLYCAVEMG (135 aa)).

This sequence belongs to the eIF-3 subunit F family. As to quaternary structure, component of the eukaryotic translation initiation factor 3 (eIF-3) complex. The eIF-3 complex interacts with pix.

The protein resides in the cytoplasm. In terms of biological role, component of the eukaryotic translation initiation factor 3 (eIF-3) complex, which is involved in protein synthesis of a specialized repertoire of mRNAs and, together with other initiation factors, stimulates binding of mRNA and methionyl-tRNAi to the 40S ribosome. The eIF-3 complex specifically targets and initiates translation of a subset of mRNAs involved in cell proliferation. This Drosophila simulans (Fruit fly) protein is Eukaryotic translation initiation factor 3 subunit F-2.